Consider the following 346-residue polypeptide: Cyclin-dependent kinase 20 (346 aa).

Positions 4 to 288 (YCILGRIGEG…ASQALLHQYF (285 aa)) constitute a Protein kinase domain. ATP is bound by residues 10–18 (IGEGAHGIV) and Lys-33. The Proton acceptor role is filled by Asp-127. The interval 298 to 324 (SELPIPQRPGGPAPKAHPGPPHVHDFH) is disordered. Residues 303 to 318 (PQRPGGPAPKAHPGPP) are compositionally biased toward pro residues.

The protein belongs to the protein kinase superfamily. CMGC Ser/Thr protein kinase family. CDC2/CDKX subfamily. Monomer. Interacts with MAK. Interacts with TBC1D32.

It is found in the nucleus. It localises to the cytoplasm. Its subcellular location is the cell projection. The protein resides in the cilium. The catalysed reaction is L-seryl-[protein] + ATP = O-phospho-L-seryl-[protein] + ADP + H(+). It carries out the reaction L-threonyl-[protein] + ATP = O-phospho-L-threonyl-[protein] + ADP + H(+). Functionally, involved in cell growth. Activates CDK2, a kinase involved in the control of the cell cycle, by phosphorylating residue 'Thr-160'. Required for high-level Shh responses in the developing neural tube. Together with TBC1D32, controls the structure of the primary cilium by coordinating assembly of the ciliary membrane and axoneme, allowing GLI2 to be properly activated in response to SHH signaling. This Mus musculus (Mouse) protein is Cyclin-dependent kinase 20 (Cdk20).